A 109-amino-acid polypeptide reads, in one-letter code: Large ribosomal subunit protein uL1 (109 aa).

The protein belongs to the universal ribosomal protein uL1 family. As to quaternary structure, part of the 50S ribosomal subunit.

In terms of biological role, binds directly to 23S rRNA. The L1 stalk is quite mobile in the ribosome, and is involved in E site tRNA release. Protein L1 is also a translational repressor protein, it controls the translation of the L11 operon by binding to its mRNA. The protein is Large ribosomal subunit protein uL1 (rplA) of Aquifex pyrophilus.